A 252-amino-acid polypeptide reads, in one-letter code: Thiazole synthase (252 aa).

Lys98 acts as the Schiff-base intermediate with DXP in catalysis. 1-deoxy-D-xylulose 5-phosphate contacts are provided by residues Gly159, 185–186 (AG), and 207–208 (AS).

Belongs to the ThiG family. Homotetramer. Forms heterodimers with either ThiH or ThiS.

It localises to the cytoplasm. It catalyses the reaction [ThiS sulfur-carrier protein]-C-terminal-Gly-aminoethanethioate + 2-iminoacetate + 1-deoxy-D-xylulose 5-phosphate = [ThiS sulfur-carrier protein]-C-terminal Gly-Gly + 2-[(2R,5Z)-2-carboxy-4-methylthiazol-5(2H)-ylidene]ethyl phosphate + 2 H2O + H(+). It participates in cofactor biosynthesis; thiamine diphosphate biosynthesis. Its function is as follows. Catalyzes the rearrangement of 1-deoxy-D-xylulose 5-phosphate (DXP) to produce the thiazole phosphate moiety of thiamine. Sulfur is provided by the thiocarboxylate moiety of the carrier protein ThiS. In vitro, sulfur can be provided by H(2)S. In Mycobacterium tuberculosis (strain ATCC 25177 / H37Ra), this protein is Thiazole synthase.